The primary structure comprises 122 residues: Large ribosomal subunit protein uL14 (122 aa).

Belongs to the universal ribosomal protein uL14 family. Part of the 50S ribosomal subunit. Forms a cluster with proteins L3 and L19. In the 70S ribosome, L14 and L19 interact and together make contacts with the 16S rRNA in bridges B5 and B8.

Its function is as follows. Binds to 23S rRNA. Forms part of two intersubunit bridges in the 70S ribosome. The sequence is that of Large ribosomal subunit protein uL14 from Beijerinckia indica subsp. indica (strain ATCC 9039 / DSM 1715 / NCIMB 8712).